The chain runs to 582 residues: Formate--tetrahydrofolate ligase (582 aa).

Position 65-72 (65-72 (TPLGEGKT)) interacts with ATP.

Belongs to the formate--tetrahydrofolate ligase family.

It catalyses the reaction (6S)-5,6,7,8-tetrahydrofolate + formate + ATP = (6R)-10-formyltetrahydrofolate + ADP + phosphate. Its pathway is one-carbon metabolism; tetrahydrofolate interconversion. The sequence is that of Formate--tetrahydrofolate ligase from Vibrio atlanticus (strain LGP32) (Vibrio splendidus (strain Mel32)).